Here is a 209-residue protein sequence, read N- to C-terminus: Pyroglutamyl-peptidase 1 (209 aa).

Catalysis depends on residues Glu85, Cys149, and His168.

Belongs to the peptidase C15 family. Monomer.

It localises to the cytoplasm. The catalysed reaction is Release of an N-terminal pyroglutamyl group from a polypeptide, the second amino acid generally not being Pro.. Functionally, removes 5-oxoproline from various penultimate amino acid residues except L-proline. This chain is Pyroglutamyl-peptidase 1 (Pgpep1), found in Mus musculus (Mouse).